A 327-amino-acid polypeptide reads, in one-letter code: Putative gluconeogenesis factor (327 aa).

Belongs to the gluconeogenesis factor family.

It localises to the cytoplasm. Required for morphogenesis under gluconeogenic growth conditions. In Lactococcus lactis subsp. lactis (strain IL1403) (Streptococcus lactis), this protein is Putative gluconeogenesis factor (yjiF).